Here is an 89-residue protein sequence, read N- to C-terminus: Small ribosomal subunit protein uS15 (89 aa).

Belongs to the universal ribosomal protein uS15 family. Part of the 30S ribosomal subunit. Forms a bridge to the 50S subunit in the 70S ribosome, contacting the 23S rRNA.

Its function is as follows. One of the primary rRNA binding proteins, it binds directly to 16S rRNA where it helps nucleate assembly of the platform of the 30S subunit by binding and bridging several RNA helices of the 16S rRNA. Functionally, forms an intersubunit bridge (bridge B4) with the 23S rRNA of the 50S subunit in the ribosome. This chain is Small ribosomal subunit protein uS15, found in Thermus thermophilus (strain ATCC BAA-163 / DSM 7039 / HB27).